Here is a 260-residue protein sequence, read N- to C-terminus: MAQRSIVRTKAVVLRSIDYGETSQIVTLFTQEKGKLGVMAKGARRPKSSFGATLQPMAYTQVVFYHKPSRTLQTLSESSHVQSFHRLREKLPTITVGLRIVELVDALMEEEDPQPAAFALVVRALHRLNIAEARVSNLWPYVQLQLAQILGVAPAVDRTRVEAVTGDEGLLSLADGGVYPADGTPDQPKRASRAALRAYAVCARADLDTVMRLTMSPAVRREVEALVRDFLRYQFDDAYPDRSRSVIAQIEGAKPTDRAT.

Belongs to the RecO family.

Involved in DNA repair and RecF pathway recombination. The protein is DNA repair protein RecO of Salinibacter ruber (strain DSM 13855 / M31).